The sequence spans 613 residues: Ribosome-associated molecular chaperone SSB1 (613 aa).

The nucleotide binding domain (NBD) stretch occupies residues 1-391 (MAEGVFSGAI…ILTGSNLSDD (391 aa)). ATP-binding positions include 16–18 (TTY), lysine 73, 205–207 (GGT), 271–278 (ERAKRTLS), and glycine 342. Positions 392 to 402 (TKDLLLLDVAP) are inter-domain linker. Residues 403-613 (LSLGVAMQGD…RVVTKAMATR (211 aa)) form a substrate binding domain (SBD) region. Positions 516–612 (SEDIEKMVSQ…KRVVTKAMAT (97 aa)) are lid domain (SBDalpha). The Nuclear export signal motif lies at 574-582 (VEAALADAF).

It belongs to the heat shock protein 70 family. Ssb-type Hsp70 subfamily. As to quaternary structure, binds to ribosomes. Binds close to the ribosomal tunnel exit via contacts with both ribosomal proteins and rRNA. Directly interacts with nascent polypeptides. This interaction is dependent on the ribosome-associated complex (RAC). Interacts with SSE1. Interacts with FES1.

It is found in the cytoplasm. It catalyses the reaction ATP + H2O = ADP + phosphate + H(+). Its function is as follows. Ribosome-bound, Hsp70-type chaperone that assists in the cotranslational folding of newly synthesized proteins in the cytosol. Stimulates folding by interacting with nascent chains, binding to short, largely hydrophobic sequences exposed by unfolded proteins, thereby stabilizing longer, more slowly translated, and aggregation-prone nascent polypeptides and domains that cannot fold stably until fully synthesized. The Hsp70-protein substrate interaction depends on ATP-binding and on allosteric regulation between the NBD and the SBD. The ATP-bound state is characterized by a fast exchange rate of substrate (low affinity state), while in the ADP-bound state exchange is much slower (high affinity state). During the Hsp70 cycle, the chaperone switches between the ATP-bound state (open conformation) and the ADP-bound state (closed conformation) by major conformational rearrangements involving mainly the lid domain. Ssb cooperates with a specific Hsp40/Hsp70 co-chaperone termed the ribosome-associated complex (RAC), which stimulates the ATPase activity of the ribosome-associated pool of Ssbs and switches it to the high affinity substrate binding state. Hsp110 chaperone SSE1 and FES1 act as nucleotide exchange factors that cause substrate release. The protein is Ribosome-associated molecular chaperone SSB1 (SSB1) of Eremothecium gossypii (strain ATCC 10895 / CBS 109.51 / FGSC 9923 / NRRL Y-1056) (Yeast).